A 226-amino-acid chain; its full sequence is 2-C-methyl-D-erythritol 4-phosphate cytidylyltransferase (226 aa).

This sequence belongs to the IspD/TarI cytidylyltransferase family. IspD subfamily.

It carries out the reaction 2-C-methyl-D-erythritol 4-phosphate + CTP + H(+) = 4-CDP-2-C-methyl-D-erythritol + diphosphate. Its pathway is isoprenoid biosynthesis; isopentenyl diphosphate biosynthesis via DXP pathway; isopentenyl diphosphate from 1-deoxy-D-xylulose 5-phosphate: step 2/6. Its function is as follows. Catalyzes the formation of 4-diphosphocytidyl-2-C-methyl-D-erythritol from CTP and 2-C-methyl-D-erythritol 4-phosphate (MEP). The protein is 2-C-methyl-D-erythritol 4-phosphate cytidylyltransferase of Rhodococcus opacus (strain B4).